A 187-amino-acid chain; its full sequence is uncharacterized protein (187 aa).

Residues 1 to 17 (MYAGGRVVRSAFARGKV) form the signal peptide. Cys18 carries the N-palmitoyl cysteine lipid modification. Cys18 carries the S-diacylglycerol cysteine lipid modification.

It localises to the cell membrane. This is an uncharacterized protein from Treponema pallidum (strain Nichols).